The following is a 272-amino-acid chain: MKVLLGLLLGYSVLILAHELPDLPRTQHPPKSELSYWCTYVPQCDFCWDCQDGICKNKITESRFIDSNHSIVNCRVFRDSKTQSCLYEISSKMPNHFNMECLHPRPYTGNEIFMRTWGGGDHQQLSIKQFCLYFIIGIAYTGCFVCALCKNLRLRTTMKLFILLSILVWLAQPVLNRPLSIFYTKQILPRTYTPPMRELEYWCTYGKHCDFCWDCKNGICKNKVLDDMPLIVQNDYISKCSITRFIDRCMYFIEPKIPYIHYMNCSLPTYFS.

The chain crosses the membrane as a helical span at residues 1-17; that stretch reads MKVLLGLLLGYSVLILA. Asparagine 68 carries N-linked (GlcNAc...) asparagine; by host glycosylation. Transmembrane regions (helical) follow at residues 129-149 and 156-176; these read QFCL…CALC and TTMK…PVLN. Residue asparagine 264 is glycosylated (N-linked (GlcNAc...) asparagine; by host).

It belongs to the asfivirus MGF 110 family.

It localises to the host membrane. Its function is as follows. Plays a role in virus cell tropism, and may be required for efficient virus replication in macrophages. This chain is Protein MGF 110-11L, found in Ornithodoros (relapsing fever ticks).